The sequence spans 714 residues: Phosphoribosylformylglycinamidine synthase subunit PurL (714 aa).

The active site involves histidine 34. An ATP-binding site is contributed by tyrosine 37. Glutamate 78 is a binding site for Mg(2+). Substrate is bound by residues 79–82 and arginine 101; that span reads SHNH. Residue histidine 80 is the Proton acceptor of the active site. Residue aspartate 102 coordinates Mg(2+). Glutamine 226 lines the substrate pocket. Aspartate 254 contacts Mg(2+). Substrate is bound at residue 298–300; sequence ESQ. The ATP site is built by aspartate 474 and glycine 511. Asparagine 512 contacts Mg(2+). Serine 514 contacts substrate.

The protein belongs to the FGAMS family. Monomer. Part of the FGAM synthase complex composed of 1 PurL, 1 PurQ and 2 PurS subunits.

The protein localises to the cytoplasm. It catalyses the reaction N(2)-formyl-N(1)-(5-phospho-beta-D-ribosyl)glycinamide + L-glutamine + ATP + H2O = 2-formamido-N(1)-(5-O-phospho-beta-D-ribosyl)acetamidine + L-glutamate + ADP + phosphate + H(+). It functions in the pathway purine metabolism; IMP biosynthesis via de novo pathway; 5-amino-1-(5-phospho-D-ribosyl)imidazole from N(2)-formyl-N(1)-(5-phospho-D-ribosyl)glycinamide: step 1/2. Part of the phosphoribosylformylglycinamidine synthase complex involved in the purines biosynthetic pathway. Catalyzes the ATP-dependent conversion of formylglycinamide ribonucleotide (FGAR) and glutamine to yield formylglycinamidine ribonucleotide (FGAM) and glutamate. The FGAM synthase complex is composed of three subunits. PurQ produces an ammonia molecule by converting glutamine to glutamate. PurL transfers the ammonia molecule to FGAR to form FGAM in an ATP-dependent manner. PurS interacts with PurQ and PurL and is thought to assist in the transfer of the ammonia molecule from PurQ to PurL. This chain is Phosphoribosylformylglycinamidine synthase subunit PurL, found in Methanothermobacter thermautotrophicus (strain ATCC 29096 / DSM 1053 / JCM 10044 / NBRC 100330 / Delta H) (Methanobacterium thermoautotrophicum).